The following is a 309-amino-acid chain: Taste receptor type 2 member 43 (309 aa).

Residue Met-1 is a topological domain, extracellular. A helical transmembrane segment spans residues 2 to 22 (ITFLPIIFSSLVVVTFVIGNF). Residues 23 to 46 (ANGFIALVNSIEWFKRQKISFADQ) are Cytoplasmic-facing. A helical membrane pass occupies residues 47 to 67 (ILTALAVSRVGLLWVLLLNWY). Residues 68–86 (STVLNPAFNSVEVRTTAYN) are Extracellular-facing. A helical transmembrane segment spans residues 87 to 107 (IWAVINHFSNWLATTLSIFYL). Residues 108 to 126 (LKIANFSNFIFLHLKRRVK) lie on the Cytoplasmic side of the membrane. A helical transmembrane segment spans residues 127–147 (SVILVMLLGPLLFLACHLFVI). Residues 148 to 178 (NMNEIVRTKEFEGNMTWKIKLKSAMYFSNMT) are Extracellular-facing. Asn-161 and Asn-176 each carry an N-linked (GlcNAc...) asparagine glycan. Residues 179-199 (VTMVANLVPFTLTLLSFMLLI) form a helical membrane-spanning segment. At 200 to 229 (CSLCKHLKKMQLHGKGSQDPSTKVHIKALQ) the chain is on the cytoplasmic side. Residues 230–250 (TVISFLLLCAIYFLSIMISVW) form a helical membrane-spanning segment. Topologically, residues 251–259 (SFGSLENKP) are extracellular. Residues 260 to 280 (VFMFCKAIRFSYPSIHPFILI) traverse the membrane as a helical segment. At 281-309 (WGNKKLKQTFLSVFWQMRYWVKGEKTSSP) the chain is on the cytoplasmic side.

This sequence belongs to the G-protein coupled receptor T2R family. Expressed in subsets of taste receptor cells of the tongue and exclusively in gustducin-positive cells. Expressed in airway epithelia.

Its subcellular location is the membrane. It is found in the cell projection. It localises to the cilium membrane. Functionally, gustducin-coupled receptor immplicated in the perception of bitter compounds in the oral cavity and the gastrointestinal tract. Signals through PLCB2 and the calcium-regulated cation channel TRPM5. Activated by the sulfonyl amide sweeteners saccharin and acesulfame K. In airway epithelial cells, binding of bitter compounds increases the intracellular calcium ion concentration and stimulates ciliary beat frequency. May act as chemosensory receptors in airway epithelial cells to detect and eliminate potential noxious agents from the airways. In Homo sapiens (Human), this protein is Taste receptor type 2 member 43 (TAS2R43).